Consider the following 202-residue polypeptide: uncharacterized protein (202 aa).

Over 1 to 6 (MITDFL) the chain is Cytoplasmic. Residues 7 to 23 (LAFSILAVSTTLGVSNL) form a helical; Signal-anchor for type II membrane protein membrane-spanning segment. Residues 24 to 202 (NKQCRDLLQC…KNGKTRGHSG (179 aa)) lie on the Extracellular side of the membrane. Asn53 carries N-linked (GlcNAc...) asparagine glycosylation.

It is found in the membrane. This is an uncharacterized protein from Caenorhabditis elegans.